The primary structure comprises 344 residues: Dihydroorotase (344 aa).

Residues histidine 14 and histidine 16 each coordinate Zn(2+). Substrate-binding positions include 16–18 and asparagine 42; that span reads HLR. Zn(2+)-binding residues include lysine 100, histidine 137, and histidine 175. The residue at position 100 (lysine 100) is an N6-carboxylysine. Residue histidine 137 participates in substrate binding. A substrate-binding site is contributed by leucine 220. Aspartate 248 provides a ligand contact to Zn(2+). Aspartate 248 is an active-site residue. Substrate is bound by residues histidine 252 and alanine 264.

Belongs to the metallo-dependent hydrolases superfamily. DHOase family. Class II DHOase subfamily. In terms of assembly, homodimer. Requires Zn(2+) as cofactor.

It catalyses the reaction (S)-dihydroorotate + H2O = N-carbamoyl-L-aspartate + H(+). It functions in the pathway pyrimidine metabolism; UMP biosynthesis via de novo pathway; (S)-dihydroorotate from bicarbonate: step 3/3. Functionally, catalyzes the reversible cyclization of carbamoyl aspartate to dihydroorotate. The polypeptide is Dihydroorotase (Cupriavidus pinatubonensis (strain JMP 134 / LMG 1197) (Cupriavidus necator (strain JMP 134))).